Here is a 381-residue protein sequence, read N- to C-terminus: E3 ubiquitin-protein ligase RNF34 (381 aa).

The FYVE-type zinc-finger motif lies at 56-107; the sequence is EGPNIVCKACGLSFSVFRKKHVCCDCKKDFCSLCSVSQENLRRCSTCHLLQE. Residues 115–134 form the SAP 1 domain; the sequence is LMRLKVKDLRQYLLLRNVPT. A Phosphoserine modification is found at Ser169. The tract at residues 216–261 is disordered; sequence LASANTDDEDGEEDDDDDDDDDDEDDDEQEENLEEQNPGLSKKKAR. Over residues 221–249 the composition is skewed to acidic residues; sequence TDDEDGEEDDDDDDDDDDEDDDEQEENLE. 2 positions are modified to phosphoserine: Ser263 and Ser265. In terms of domain architecture, SAP 2 spans 273–287; that stretch reads VEGMSVRQLKEILAR. The RING-type zinc finger occupies 334-369; sequence CRICMDAVIDCVLLECGHMVTCTKCGKRMSECPICR.

As to quaternary structure, interacts with CASP8 and CASP10. Interacts with p53/TP53; involved in p53/TP53 ubiquitination. Interacts (via RING-type zinc finger) with MDM2; the interaction stabilizes MDM2. Interacts (via RING-type zinc finger) with PPARGC1A. Interacts with NOD1. In terms of processing, proteolytically cleaved by caspases upon induction of apoptosis by TNF. Post-translationally, autoubiquitinated (in vitro). Ubiquitous. Detected in brain, cerebellum, midbrain, hippocampus, striatum, heart, lung, kidney, muscle, spleen and testis.

The protein resides in the cell membrane. Its subcellular location is the endomembrane system. It is found in the nucleus. It localises to the nucleus speckle. The protein localises to the cytoplasm. The protein resides in the cytosol. The enzyme catalyses S-ubiquitinyl-[E2 ubiquitin-conjugating enzyme]-L-cysteine + [acceptor protein]-L-lysine = [E2 ubiquitin-conjugating enzyme]-L-cysteine + N(6)-ubiquitinyl-[acceptor protein]-L-lysine.. It functions in the pathway protein modification; protein ubiquitination. In terms of biological role, E3 ubiquitin-protein ligase that regulates several biological processes through the ubiquitin-mediated proteasomal degradation of various target proteins. Ubiquitinates the caspases CASP8 and CASP10, promoting their proteasomal degradation, to negatively regulate cell death downstream of death domain receptors in the extrinsic pathway of apoptosis. May mediate 'Lys-48'-linked polyubiquitination of RIPK1 and its subsequent proteasomal degradation thereby indirectly regulating the tumor necrosis factor-mediated signaling pathway. Negatively regulates p53/TP53 through its direct ubiquitination and targeting to proteasomal degradation. Indirectly, may also negatively regulate p53/TP53 through ubiquitination and degradation of SFN. Mediates PPARGC1A proteasomal degradation probably through ubiquitination thereby indirectly regulating the metabolism of brown fat cells. Possibly involved in innate immunity, through 'Lys-48'-linked polyubiquitination of NOD1 and its subsequent proteasomal degradation. This chain is E3 ubiquitin-protein ligase RNF34, found in Rattus norvegicus (Rat).